Reading from the N-terminus, the 194-residue chain is Peptidyl-tRNA hydrolase (194 aa).

Tyrosine 17 is a tRNA binding site. Histidine 22 acts as the Proton acceptor in catalysis. Residues tyrosine 68, asparagine 70, and asparagine 116 each contribute to the tRNA site.

The protein belongs to the PTH family. Monomer.

The protein localises to the cytoplasm. The enzyme catalyses an N-acyl-L-alpha-aminoacyl-tRNA + H2O = an N-acyl-L-amino acid + a tRNA + H(+). Its function is as follows. Hydrolyzes ribosome-free peptidyl-tRNAs (with 1 or more amino acids incorporated), which drop off the ribosome during protein synthesis, or as a result of ribosome stalling. In terms of biological role, catalyzes the release of premature peptidyl moieties from peptidyl-tRNA molecules trapped in stalled 50S ribosomal subunits, and thus maintains levels of free tRNAs and 50S ribosomes. This is Peptidyl-tRNA hydrolase from Pseudomonas fluorescens (strain SBW25).